Reading from the N-terminus, the 249-residue chain is Small ribosomal subunit protein uS2 (249 aa).

Belongs to the universal ribosomal protein uS2 family.

The polypeptide is Small ribosomal subunit protein uS2 (Listeria innocua serovar 6a (strain ATCC BAA-680 / CLIP 11262)).